Here is a 300-residue protein sequence, read N- to C-terminus: Formamidopyrimidine-DNA glycosylase (300 aa).

Pro2 (schiff-base intermediate with DNA) is an active-site residue. Glu3 serves as the catalytic Proton donor. The active-site Proton donor; for beta-elimination activity is the Lys60. Residues His108, Arg136, and Arg181 each contribute to the DNA site. An FPG-type zinc finger spans residues 266–300 (WVYSRAGQPCRICNTPLEKIKLAGRSTHFCPQCQK). Arg290 acts as the Proton donor; for delta-elimination activity in catalysis.

This sequence belongs to the FPG family. As to quaternary structure, monomer. Zn(2+) serves as cofactor.

It catalyses the reaction Hydrolysis of DNA containing ring-opened 7-methylguanine residues, releasing 2,6-diamino-4-hydroxy-5-(N-methyl)formamidopyrimidine.. The enzyme catalyses 2'-deoxyribonucleotide-(2'-deoxyribose 5'-phosphate)-2'-deoxyribonucleotide-DNA = a 3'-end 2'-deoxyribonucleotide-(2,3-dehydro-2,3-deoxyribose 5'-phosphate)-DNA + a 5'-end 5'-phospho-2'-deoxyribonucleoside-DNA + H(+). In terms of biological role, involved in base excision repair of DNA damaged by oxidation or by mutagenic agents. Acts as a DNA glycosylase that recognizes and removes damaged bases. Has a preference for oxidized purines, such as 7,8-dihydro-8-oxoguanine (8-oxoG). Has AP (apurinic/apyrimidinic) lyase activity and introduces nicks in the DNA strand. Cleaves the DNA backbone by beta-delta elimination to generate a single-strand break at the site of the removed base with both 3'- and 5'-phosphates. The polypeptide is Formamidopyrimidine-DNA glycosylase (Trichodesmium erythraeum (strain IMS101)).